The following is a 98-amino-acid chain: Defensin (98 aa).

3 disulfide bridges follow: C61–C88, C74–C94, and C78–C96.

This sequence belongs to the invertebrate defensin family. Type 1 subfamily.

This chain is Defensin, found in Mamestra brassicae (Cabbage moth).